The primary structure comprises 394 residues: Elongation factor Tu (394 aa).

The tr-type G domain occupies K10–E204. The G1 stretch occupies residues G19–T26. Residue G19–T26 coordinates GTP. Residue T26 participates in Mg(2+) binding. The G2 stretch occupies residues G60–S64. A G3 region spans residues D81 to G84. GTP is bound by residues D81 to H85 and N136 to D139. Positions N136–D139 are G4. Residues S174–L176 are G5.

This sequence belongs to the TRAFAC class translation factor GTPase superfamily. Classic translation factor GTPase family. EF-Tu/EF-1A subfamily. Monomer.

The protein localises to the cytoplasm. The catalysed reaction is GTP + H2O = GDP + phosphate + H(+). GTP hydrolase that promotes the GTP-dependent binding of aminoacyl-tRNA to the A-site of ribosomes during protein biosynthesis. This is Elongation factor Tu from Pseudoalteromonas atlantica (strain T6c / ATCC BAA-1087).